The following is a 212-amino-acid chain: Ribonuclease HII (212 aa).

The RNase H type-2 domain maps to 22–212; sequence ILIAGLDEAG…APLKGMIDGL (191 aa). Asp-28, Glu-29, and Asp-123 together coordinate a divalent metal cation.

The protein belongs to the RNase HII family. Requires Mn(2+) as cofactor. It depends on Mg(2+) as a cofactor.

The protein resides in the cytoplasm. It carries out the reaction Endonucleolytic cleavage to 5'-phosphomonoester.. Endonuclease that specifically degrades the RNA of RNA-DNA hybrids. This chain is Ribonuclease HII, found in Dehalococcoides mccartyi (strain ATCC BAA-2100 / JCM 16839 / KCTC 5957 / BAV1).